A 397-amino-acid polypeptide reads, in one-letter code: 8-amino-7-oxononanoate synthase (397 aa).

A substrate-binding site is contributed by arginine 23. 110 to 111 provides a ligand contact to pyridoxal 5'-phosphate; it reads GY. Histidine 135 lines the substrate pocket. Pyridoxal 5'-phosphate contacts are provided by serine 181, histidine 209, and threonine 237. Residue lysine 240 is modified to N6-(pyridoxal phosphate)lysine. A substrate-binding site is contributed by threonine 354.

Belongs to the class-II pyridoxal-phosphate-dependent aminotransferase family. BioF subfamily. As to quaternary structure, homodimer. Pyridoxal 5'-phosphate serves as cofactor.

The enzyme catalyses 6-carboxyhexanoyl-[ACP] + L-alanine + H(+) = (8S)-8-amino-7-oxononanoate + holo-[ACP] + CO2. It functions in the pathway cofactor biosynthesis; biotin biosynthesis. Functionally, catalyzes the decarboxylative condensation of pimeloyl-[acyl-carrier protein] and L-alanine to produce 8-amino-7-oxononanoate (AON), [acyl-carrier protein], and carbon dioxide. This chain is 8-amino-7-oxononanoate synthase, found in Anaeromyxobacter dehalogenans (strain 2CP-C).